The sequence spans 549 residues: Chaperonin GroEL 5 (549 aa).

ATP contacts are provided by residues 30–33 (TLGP), K51, 87–91 (DGTTT), G415, and D495.

Belongs to the chaperonin (HSP60) family. Forms a cylinder of 14 subunits composed of two heptameric rings stacked back-to-back. Interacts with the co-chaperonin GroES.

It localises to the cytoplasm. The enzyme catalyses ATP + H2O + a folded polypeptide = ADP + phosphate + an unfolded polypeptide.. Together with its co-chaperonin GroES, plays an essential role in assisting protein folding. The GroEL-GroES system forms a nano-cage that allows encapsulation of the non-native substrate proteins and provides a physical environment optimized to promote and accelerate protein folding. This Mesorhizobium japonicum (strain LMG 29417 / CECT 9101 / MAFF 303099) (Mesorhizobium loti (strain MAFF 303099)) protein is Chaperonin GroEL 5.